Reading from the N-terminus, the 746-residue chain is Centromere protein I (746 aa).

Positions 1-24 are disordered; it reads MATQRVTRNSQQQNRISQGSNSRQ.

The protein belongs to the CENP-I/CTF3 family. In terms of assembly, component of the CENPA-CAD complex, composed of CENPI, CENPK, CENPL, CENPO, CENPP, CENPQ, CENPR and CENPS. The CENPA-CAD complex interacts with the CENPA-NAC complex, at least composed of CENPA, CENPC, CENPH, CENPM, CENPN, CENPT and CENPU. Interacts with SENP6. Post-translationally, sumoylated. Sumoylated form can be polyubiquitinated by RNF4, leading to its degradation. Desumoylation by SENP6 prevents its degradation.

It is found in the nucleus. The protein resides in the chromosome. It localises to the centromere. Functionally, component of the CENPA-CAD (nucleosome distal) complex, a complex recruited to centromeres which is involved in assembly of kinetochore proteins, mitotic progression and chromosome segregation. May be involved in incorporation of newly synthesized CENPA into centromeres via its interaction with the CENPA-NAC complex. Required for the localization of CENPF, MAD1L1 and MAD2 (MAD2L1 or MAD2L2) to kinetochores. Involved in the response of gonadal tissues to follicle-stimulating hormone. In Mus musculus (Mouse), this protein is Centromere protein I (Cenpi).